We begin with the raw amino-acid sequence, 1168 residues long: Carbamoyl phosphate synthase arginine-specific large chain, mitochondrial (1168 aa).

Residues 1 to 51 constitute a mitochondrion transit peptide; it reads MLSTVHKAGRAPALLRHGRRVPVQASQLRALTSGAQNTSIFQTQANAAQRL. Positions 86-483 are carboxyphosphate synthetic domain; that stretch reads RDHVDVKKVL…SFQKAIRQVD (398 aa). ATP contacts are provided by residues arginine 213, 243–298, arginine 253, glycine 259, glycine 260, lysine 290, leucine 292, glutamate 297, glycine 323, isoleucine 324, histidine 325, glutamine 366, and glutamate 380; that span reads ANKI…WKEV. In terms of domain architecture, ATP-grasp 1 spans 217–409; sequence AKALEEINIP…LAYTAAKIGL (193 aa). Residues glutamine 366, glutamate 380, and asparagine 382 each contribute to the Mg(2+) site. Mn(2+) contacts are provided by glutamine 366, glutamate 380, and asparagine 382. Residues 484-628 are oligomerization domain; the sequence is PRFVGFQGDK…YTTYNASSHD (145 aa). The tract at residues 629–1017 is carbamoyl phosphate synthetic domain; the sequence is VTFEDKGTVI…AYWASLQSAM (389 aa). The region spanning 754–951 is the ATP-grasp 2 domain; that stretch reads SEILDSIGVD…FIDAATKALV (198 aa). Residues 780–837, arginine 790, lysine 829, isoleucine 831, glutamate 836, glycine 861, valine 862, histidine 863, serine 864, glutamine 904, and glutamate 922 contribute to the ATP site; that span reads AEEV…AQEI. Residues glutamine 904, glutamate 922, and asparagine 924 each contribute to the Mg(2+) site. Positions 904, 922, and 924 each coordinate Mn(2+). The interval 1018–1152 is allosteric domain; that stretch reads NFRVPEPGEG…AEKLPRPEGI (135 aa). Residues 1019–1168 form the MGS-like domain; the sequence is FRVPEPGEGL…WSEFIGGKPL (150 aa).

This sequence belongs to the CarB family. As to quaternary structure, heterodimer composed of 2 chains; the small (or glutamine) chain promotes the hydrolysis of glutamine to ammonia, which is used by the large (or ammonia) chain to synthesize carbamoyl phosphate. It depends on Mg(2+) as a cofactor. Requires Mn(2+) as cofactor.

The protein resides in the mitochondrion matrix. The catalysed reaction is hydrogencarbonate + L-glutamine + 2 ATP + H2O = carbamoyl phosphate + L-glutamate + 2 ADP + phosphate + 2 H(+). It catalyses the reaction hydrogencarbonate + NH4(+) + 2 ATP = carbamoyl phosphate + 2 ADP + phosphate + 2 H(+). It functions in the pathway amino-acid biosynthesis; L-arginine biosynthesis; carbamoyl phosphate from bicarbonate: step 1/1. Functionally, large subunit of the arginine-specific carbamoyl phosphate synthase (CPSase). CPSase catalyzes the formation of carbamoyl phosphate from the ammonia moiety of glutamine, hydrogencarbonate, and phosphate donated by ATP, the first step of the arginine biosynthetic pathway. The large subunit (synthetase) binds the substrates ammonia (free or transferred from glutamine from the small subunit), hydrogencarbonate and ATP and carries out an ATP-coupled ligase reaction, activating hydrogencarbonate by forming carboxy phosphate which reacts with ammonia to form carbamoyl phosphate. This Neurospora crassa (strain ATCC 24698 / 74-OR23-1A / CBS 708.71 / DSM 1257 / FGSC 987) protein is Carbamoyl phosphate synthase arginine-specific large chain, mitochondrial (arg-3).